Consider the following 420-residue polypeptide: Proteinase-activated receptor 1 (420 aa).

The signal sequence occupies residues 1 to 20; the sequence is MMELRVLLLLLLLTLLGAMG. A propeptide spans 21 to 42 (removed for receptor activation); that stretch reads SLCLANSDTQAKGAHSNNMTIK. N-linked (GlcNAc...) asparagine glycosylation occurs at asparagine 38. Residues 43-101 are Extracellular-facing; that stretch reads TFRIFDDSESEFEEIPWDELDESGEGSGDQAPVSRSARKPIRRNITKEAEQYLSSQWLT. The interval 61–80 is disordered; that stretch reads ELDESGEGSGDQAPVSRSAR. Residue asparagine 86 is glycosylated (N-linked (GlcNAc...) asparagine). Residues 102-127 form a helical membrane-spanning segment; the sequence is KFVPSLYTVVFIVGLPLNLLAIIIFL. Topologically, residues 128-136 are cytoplasmic; sequence FKMKVRKPA. A helical membrane pass occupies residues 137–156; it reads VVYMLNLAIADVFFVSVLPF. The Extracellular portion of the chain corresponds to 157–175; sequence KIAYHLSGNDWLFGPGMCR. A disulfide bond links cysteine 174 and cysteine 253. Residues 176–197 traverse the membrane as a helical segment; sequence IVTAIFYCNMYCSVLLIASISV. Topologically, residues 198 to 217 are cytoplasmic; that stretch reads DRFLAVVYPMHSLSWRTMSR. Residues 218–238 form a helical membrane-spanning segment; sequence AYMACSFIWLISIASTIPLLV. Topologically, residues 239–267 are extracellular; that stretch reads TEQTQKIPRLDITTCHDVLDLKDLKDFYI. Residues 268-287 form a helical membrane-spanning segment; it reads YYFSSFCLLFFFVPFIITTI. Topologically, residues 288-310 are cytoplasmic; it reads CYIGIIRSLSSSSIENSCKKTRA. Residues 311–333 form a helical membrane-spanning segment; sequence LFLAVVVLCVFIICFGPTNVLFL. Residues 334–345 are Extracellular-facing; that stretch reads THYLQEANEFLY. The helical transmembrane segment at 346-369 threads the bilayer; it reads FAYILSACVGSVSCCLDPLIYYYA. Over 370–420 the chain is Cytoplasmic; the sequence is SSQCQRYLYSLLCCRKVSEPGSSTGQLMSTAMKNDNCSTNAKSSIYKKLLA.

The protein belongs to the G-protein coupled receptor 1 family. Proteolytic cleavage generates a new N-terminus that functions as a tethered ligand.

The protein resides in the cell membrane. In terms of biological role, high affinity receptor that binds the activated thrombin, leading to calcium release from intracellular stores. The thrombin-activated receptor signaling pathway is mediated through PTX-insensitive G proteins, activation of phospholipase C resulting in the production of 1D-myo-inositol 1,4,5-trisphosphate (InsP3) which binds to InsP3 receptors causing calcium release from the stores. The chain is Proteinase-activated receptor 1 from Xenopus laevis (African clawed frog).